The chain runs to 422 residues: Phthiocerol/phthiodiolone dimycocerosyl transferase (422 aa).

Histidine 124 acts as the Proton acceptor in catalysis.

It belongs to the acyltransferase PapA5 family. Monomer. Interacts directly with the acyl carrier protein (ACP) domain of the mycocerosic acid synthase (mas) protein.

It carries out the reaction 2 a mycocerosyl-[mycocerosic acid synthase] + a phthiocerol = a dimycocerosyl phthiocerol + 2 holo-[mycocerosic acid synthase].. The enzyme catalyses 2 a mycocerosyl-[mycocerosic acid synthase] + a phthiodiolone = a dimycocerosyl phthiodiolone + 2 holo-[mycocerosic acid synthase].. The catalysed reaction is 2 a mycocerosyl-[mycocerosic acid synthase] + a phenolphthiocerol = a dimycocerosyl phenolphthiocerol + 2 holo-[mycocerosic acid synthase].. Functionally, catalyzes diesterification of phthiocerol, phthiodiolone, and phenolphthiocerol with mycocerosic acids, the final step in the phthiocerol, phthiodiolone and phenolphthiocerol dimycocerosate esters (PDIM) synthesis. Can directly transfer the mycocerosate bound to the mycocerosic acid synthase (mas) onto the substrate alcohols. This Mycobacterium tuberculosis (strain ATCC 25177 / H37Ra) protein is Phthiocerol/phthiodiolone dimycocerosyl transferase (papA5).